The following is a 340-amino-acid chain: Probable cyclic nucleotide phosphodiesterase PsycPRwf_0181 (340 aa).

The segment at 1 to 36 (MAPLPHSVSPRHTQVADNGRLSEPTDYHPPTEISTD) is disordered. Residues Asp47, His49, Asp128, Asn158, His237, His276, and His278 each contribute to the Fe cation site. AMP is bound by residues His49, Asp128, and 158 to 159 (NH). His278 contributes to the AMP binding site.

Belongs to the cyclic nucleotide phosphodiesterase class-III family. Fe(2+) serves as cofactor.

This Psychrobacter sp. (strain PRwf-1) protein is Probable cyclic nucleotide phosphodiesterase PsycPRwf_0181.